Consider the following 393-residue polypeptide: Probable N-acetyl-LL-diaminopimelate aminotransferase (393 aa).

Residue Lys-231 is modified to N6-(pyridoxal phosphate)lysine.

It belongs to the class-I pyridoxal-phosphate-dependent aminotransferase family. Homodimer. The cofactor is pyridoxal 5'-phosphate.

It localises to the cytoplasm. It catalyses the reaction N-acetyl-(2S,6S)-2,6-diaminopimelate + 2-oxoglutarate = L-2-acetamido-6-oxoheptanedioate + L-glutamate. Its pathway is amino-acid biosynthesis; L-lysine biosynthesis via DAP pathway; LL-2,6-diaminopimelate from (S)-tetrahydrodipicolinate (acetylase route): step 2/3. Essential for murein biosynthesis. Probably catalyzes the conversion of L-2-acetamido-6-oxopimelate to N-acetyl-LL-2,6-diaminopimelate. This chain is Probable N-acetyl-LL-diaminopimelate aminotransferase, found in Bacillus subtilis (strain 168).